The sequence spans 1659 residues: eIF-2-alpha kinase GCN2 (1659 aa).

Residues 17–128 (NELEAIRSIY…SFTQEKLDEF (112 aa)) form the RWD domain. A disordered region spans residues 149–170 (KEQLEKEEREKQQETIKKRSDE). 2 consecutive Protein kinase domains span residues 256 to 527 (LVKP…MKFL) and 599 to 981 (FEEI…SGWL). ATP-binding positions include 605–613 (LGQGAFGQV) and Lys628. Disordered regions lie at residues 671 to 691 (NVFE…DFEE) and 727 to 768 (FENS…VPRR). Ser761 is modified (phosphoserine). Asp835 functions as the Proton acceptor in the catalytic mechanism. Thr882 and Thr887 each carry phosphothreonine; by autocatalysis. A histidyl-tRNA synthetase-like region spans residues 999–1519 (NPSSPWQQQV…EFKRWDENSS (521 aa)).

It belongs to the protein kinase superfamily. Ser/Thr protein kinase family. GCN2 subfamily. In terms of assembly, homodimer; homodimerization is important for kinase activation by uncharged tRNAs. Interacts (via N-terminal RWD domain) with GCN1 (via N- and C-terminus); this interaction stimulates GCN2 kinase activity in a GCN20-dependent manner in response to amino acid starvation. Interacts (via N-terminus) with the GCN1-GCN20 complex on translating ribosomes in amino acid-starved cells; GCN1 may bind near the ribosomal A-site and promotes the transfer of uncharged tRNAs from the A-site to the tRNA-binding domain in GCN2 for its subsequent kinase activation, and hence allowing GCN4 translational activation and derepression of amino acid biosynthetic genes. Interacts (via C-terminus) with TIF11; this interaction is direct, occurs in amino acid-repleted cells, may be stabilized in a ribosome-dependent manner, reduces GCN2-mediated eIF-2-alpha phosphorylation but not GCN2 autophosphorylation and is lost in amino acid-starved cells and by uncharged tRNAs. Associates (via C-terminus) with ribosomes. The cofactor is Mg(2+). In terms of processing, autophosphorylated, autophosphorylation on Thr-882 and Thr-887 increases kinase activity.

It is found in the cytoplasm. The enzyme catalyses L-seryl-[protein] + ATP = O-phospho-L-seryl-[protein] + ADP + H(+). The catalysed reaction is L-threonyl-[protein] + ATP = O-phospho-L-threonyl-[protein] + ADP + H(+). Its activity is regulated as follows. The integrated stress response (ISR) is activated in response to conditions that promote ribosome collisions: GCN1, which acts as a ribosome collision sensor, activates GCN2. The RQC pathway and the integrated stress response (ISR) antagonize each other: HEL2 prevents the activation of GCN2, while GCN2 suppresses RQC activation. Ribosome stalling-induced integrated stress response prefers ribosomes with empty A sites. The kinase activity is stimulated upon binding to uncharged tRNAs. Its function is as follows. Metabolic-stress sensing protein kinase that phosphorylates the alpha subunit of eukaryotic translation initiation factor 2 (eIF-2-alpha/SUI2) on 'Ser-52' in response to low amino acid, carbon, or purine availability. Required for adapatation to nutrient starvation by acting as a key component of the integrated stress response (ISR), by which cells alter their translational and transcriptional output in response to starvation. Converts phosphorylated eIF-2-alpha/SUI2 either to a competitive inhibitor of translation initiation factor eIF-2B, leading to a global protein synthesis repression, and thus to a reduced overall utilization of amino acids, or to a translational initiation activation of specific mRNAs, such as the transcriptional activator GCN4, and hence allowing GCN4-mediated reprogramming of transcription to alleviate nutrient depletion. Binds uncharged tRNAs. Binds to aminoacylated tRNA(Phe) less tightly than to deacylated tRNA(Phe). Binds to double-stranded RNA. The sequence is that of eIF-2-alpha kinase GCN2 from Saccharomyces cerevisiae (strain ATCC 204508 / S288c) (Baker's yeast).